A 355-amino-acid chain; its full sequence is F-box protein At1g31080 (355 aa).

Residues 4 to 49 (GANSASIPNDLILEILSRLPAKSTGRFRCVSKLWGSMLCHSYFTEL) form the F-box domain. Polar residues predominate over residues 306 to 320 (AGTSRSPPKQSTSTS). The tract at residues 306-333 (AGTSRSPPKQSTSTSSREDHEVRTLAHQ) is disordered. The span at 321 to 333 (SREDHEVRTLAHQ) shows a compositional bias: basic and acidic residues.

The sequence is that of F-box protein At1g31080 from Arabidopsis thaliana (Mouse-ear cress).